A 648-amino-acid polypeptide reads, in one-letter code: Transcription termination factor FttA (648 aa).

Residues 1 to 179 form a not required for dimerization, required for cleavage at some sites region; sequence MIKRETQVDQ…QVGRNIYRKP (179 aa). The segment at 9–76 is KHa; the sequence is DQILKDIRGI…ISIRPDPDVL (68 aa). A KHb region spans residues 77 to 144; that stretch reads LPPEEAEKLI…WAPKVVRTPP (68 aa). Residues 185–395 are metallo-beta-lactamase N-terminus; sequence WIRITGLGGF…LVMESTYGGA (211 aa). Zn(2+) contacts are provided by His253, His255, Asp257, His258, His341, and Asp364. The interval 396-589 is beta-Casp; it reads NDIQMPREEA…MEVHTIDGFS (194 aa). The metallo-beta-lactamase C-terminus stretch occupies residues 590–648; that stretch reads GHADRRELMNYVAKVRPRPERVITVHGEPQKCLDLATSIHRKFGLSTRAPNNLDTIRLR. His615 contacts Zn(2+).

Belongs to the metallo-beta-lactamase superfamily. RNA-metabolizing metallo-beta-lactamase-like family. FttA subfamily. As to quaternary structure, homodimer. Interacts with RNA polymerase (RNAP), interacts with the Spt4-Spt5 complex. It depends on Zn(2+) as a cofactor.

With respect to regulation, endoRNase activity is inhibited by 1,10-phenanthroline. Functionally, terminates transcription on the whole genome. Termination is linked to FttA-mediated RNA cleavage and does not require NTP hydrolysis. Cleaves endonucleolytically at the RNA exit channel of RNA polymerase (RNAP); the 5'-3' exonuclease activity of this protein degrades the nascent RNA released from RNAP. A single-stranded endoribonuclease (endoRNase) with a preference for cleavage at CA dinucleotides. Has 5'-3' exoribonuclease (exoRNase) activity on 5'-monophosphorylated RNA; this activity does not occur on 5'-tri-phosphorylated or 5'-OH substrates. Also has weak activity 5'-3' exodeoxyribonuclease activity on ssDNA. The polypeptide is Transcription termination factor FttA (Pyrococcus abyssi (strain GE5 / Orsay)).